Consider the following 375-residue polypeptide: MNVYQSLLQPFVFQTLRADPETVKLQLLRLGESIERHSDRPPARWIKQQLAQTFSLPTPELSQQLWGLTFPNPIGLAAGLDKDGVAAGLWGSFGFGFAEVGTVTYHPQPGNPRPRLFRLPADRAGINRMGFNNRGAAALAQTLEQAQKRSARTIPLGINLGKSKVTPLEEAVEDYLGSFRLLQAWGDYFVINVSSPNTPGLRSLQTAANLEPILSALQNENQARRPLLLKISPDLAWEDLATIIDLVKTYQWAGLIATNTTIARPELQTKVIPQTGKSPQEEAGGLSGAPLKQRSTEVIRFIHQQTGGQLPIIGVGGVFTAADAWEKIMAGATLIQVYTGWIYEGPGMVKQLLTGLQTELQQRGLDCLAALDRQP.

Residues 78–82 and threonine 102 contribute to the FMN site; that span reads AGLDK. Lysine 82 provides a ligand contact to substrate. Residue 127 to 131 coordinates substrate; that stretch reads NRMGF. Positions 159 and 192 each coordinate FMN. Residue asparagine 192 participates in substrate binding. Serine 195 functions as the Nucleophile in the catalytic mechanism. Asparagine 197 contacts substrate. 2 residues coordinate FMN: lysine 230 and threonine 258. 259–260 contacts substrate; it reads NT. FMN is bound by residues glycine 288, glycine 317, and 338–339; that span reads YT.

Belongs to the dihydroorotate dehydrogenase family. Type 2 subfamily. Monomer. FMN serves as cofactor.

It is found in the cell membrane. It catalyses the reaction (S)-dihydroorotate + a quinone = orotate + a quinol. Its pathway is pyrimidine metabolism; UMP biosynthesis via de novo pathway; orotate from (S)-dihydroorotate (quinone route): step 1/1. Its function is as follows. Catalyzes the conversion of dihydroorotate to orotate with quinone as electron acceptor. The protein is Dihydroorotate dehydrogenase (quinone) of Cyanothece sp. (strain PCC 7425 / ATCC 29141).